Consider the following 165-residue polypeptide: Short form salivary protein D7R1 (165 aa).

Residues 1–21 (MFNKLHLVSLLACGLFVIAQA) form the signal peptide. 3 disulfide bridges follow: cysteine 27–cysteine 59, cysteine 40–cysteine 164, and cysteine 98–cysteine 117. Positions 28, 56, 115, 132, and 135 each coordinate serotonin. Residues tyrosine 115, aspartate 132, and glutamate 135 each contribute to the histamine site.

This sequence belongs to the PBP/GOBP family. In terms of tissue distribution, female salivary gland. Not detected in female carcass without salivary glands. Not detected in male tissues.

Its subcellular location is the secreted. Modulates blood feeding of female mosquitoes on vertebrate species by binding and sequestering different mediators involved in the host response. Binds serotonin and histamine. Increases blood clotting time. This Anopheles gambiae (African malaria mosquito) protein is Short form salivary protein D7R1.